Reading from the N-terminus, the 218-residue chain is Thiopurine S-methyltransferase (218 aa).

4 residues coordinate S-adenosyl-L-methionine: W10, L45, E66, and R123.

Belongs to the class I-like SAM-binding methyltransferase superfamily. TPMT family.

Its subcellular location is the cytoplasm. It carries out the reaction S-adenosyl-L-methionine + a thiopurine = S-adenosyl-L-homocysteine + a thiopurine S-methylether.. The polypeptide is Thiopurine S-methyltransferase (Pseudomonas paraeruginosa (strain DSM 24068 / PA7) (Pseudomonas aeruginosa (strain PA7))).